The sequence spans 494 residues: MSSEEDYFDELEYDLADEVNEEKEDIQTKKLTTVNCQTEKFNPFEILPESIELFRTLALISPDRLSLSETAQILPKIVDLKRILQQQEIDFIKLLPFFNEIIPLIKSNIKLMHNFLISLYSRRFPELSSLIPSPLQYSKVISILENENYSKNESDELFFHLENKAKLTREQILVLTMSMKTSFKNKEPLDIKTRTQILEANSILENLWKLQEDIGQYIASKISIIAPNVCFLVGPEIAAQLIAHAGGVLEFSRIPSCNIASIGKNKHLSHELHTLESGVRQEGYLFASDMIQKFPVSVHKQMLRMLCAKVSLAARVDAGQKNGDRNTVLAHKWKAELSKKARKLSEAPSISETKALPIPEDQPKKKRAGRKFRKYKEKFRLSHVRQLQNRMEFGKQEQTVLDSYGEEVGLGMSNTSLQQAVGATSGSRRSAGNQAKLTKVMKHRISEANQQADEFLISLGHNTEQPNLSPEMVQMHKKQHTNPEEETNWFSGHG.

Coiled-coil stretches lie at residues 88–122 (EIDF…LYSR) and 191–225 (IKTR…ISII). Residues 225–346 (IAPNVCFLVG…LSKKARKLSE (122 aa)) form the Nop domain. The tract at residues 344–370 (LSEAPSISETKALPIPEDQPKKKRAGR) is disordered.

It belongs to the PRP31 family. In terms of assembly, component of the U4/U6-U5 tri-snRNP complex composed of the U4, U6 and U5 snRNAs and at least PRP3, PRP4, PRP6, PRP8, PRP18, PRP31, PRP38, SNU13, SNU23, SNU66, SNU114, SPP381, SMB1, SMD1, SMD2, SMD3, SMX2, SMX3, LSM2, LSM3, LSM4, LSM5, LSM6, LSM7, LSM8, BRR2 and DIB1.

Its subcellular location is the nucleus. Its function is as follows. Promotes the association of the U4/U6.U5 tri-snRNP particle with pre-spliceosomes to form the mature spliceosomal complex. The polypeptide is Pre-mRNA-processing factor 31 (PRP31) (Saccharomyces cerevisiae (strain ATCC 204508 / S288c) (Baker's yeast)).